A 112-amino-acid polypeptide reads, in one-letter code: Outer membrane protein assembly factor BamE (112 aa).

The first 19 residues, methionine 1–glycine 19, serve as a signal peptide directing secretion. Cysteine 20 is lipidated: N-palmitoyl cysteine. Residue cysteine 20 is the site of S-diacylglycerol cysteine attachment.

It belongs to the BamE family. As to quaternary structure, part of the Bam complex, which is composed of the outer membrane protein BamA, and four lipoproteins BamB, BamC, BamD and BamE.

The protein resides in the cell outer membrane. In terms of biological role, part of the outer membrane protein assembly complex, which is involved in assembly and insertion of beta-barrel proteins into the outer membrane. In Salmonella typhimurium (strain LT2 / SGSC1412 / ATCC 700720), this protein is Outer membrane protein assembly factor BamE.